The chain runs to 247 residues: RNA-free ribonuclease P (247 aa).

Belongs to the HARP family.

The catalysed reaction is Endonucleolytic cleavage of RNA, removing 5'-extranucleotides from tRNA precursor.. Functionally, RNA-free RNase P that catalyzes the removal of the 5'-leader sequence from pre-tRNA to produce the mature 5'-terminus. This chain is RNA-free ribonuclease P, found in Methanosarcina mazei (strain ATCC BAA-159 / DSM 3647 / Goe1 / Go1 / JCM 11833 / OCM 88) (Methanosarcina frisia).